The following is a 274-amino-acid chain: Energy-coupling factor transporter ATP-binding protein EcfA (274 aa).

Residues Ile2–Pro235 form the ABC transporter domain. ATP is bound at residue Gly35 to Ser42.

This sequence belongs to the ABC transporter superfamily. Energy-coupling factor EcfA family. As to quaternary structure, forms a stable energy-coupling factor (ECF) transporter complex composed of 2 membrane-embedded substrate-binding proteins (S component), 2 ATP-binding proteins (A component) and 2 transmembrane proteins (T component).

It is found in the cell membrane. In terms of biological role, ATP-binding (A) component of a common energy-coupling factor (ECF) ABC-transporter complex. Unlike classic ABC transporters this ECF transporter provides the energy necessary to transport a number of different substrates. This Methanosarcina acetivorans (strain ATCC 35395 / DSM 2834 / JCM 12185 / C2A) protein is Energy-coupling factor transporter ATP-binding protein EcfA.